The primary structure comprises 206 residues: Large ribosomal subunit protein uL4 (206 aa).

The disordered stretch occupies residues 45-75; it reads RQGTHSTKTRGEVRGGGRKPWRQKGTGRARQ. Basic residues predominate over residues 60–71; sequence GGRKPWRQKGTG.

This sequence belongs to the universal ribosomal protein uL4 family. In terms of assembly, part of the 50S ribosomal subunit.

One of the primary rRNA binding proteins, this protein initially binds near the 5'-end of the 23S rRNA. It is important during the early stages of 50S assembly. It makes multiple contacts with different domains of the 23S rRNA in the assembled 50S subunit and ribosome. Functionally, forms part of the polypeptide exit tunnel. In Thermoanaerobacter pseudethanolicus (strain ATCC 33223 / 39E) (Clostridium thermohydrosulfuricum), this protein is Large ribosomal subunit protein uL4.